The following is a 557-amino-acid chain: Potassium-transporting ATPase potassium-binding subunit (557 aa).

12 helical membrane-spanning segments follow: residues 5–25 (GFLLIATFLLVLMVLARPLGS), 63–83 (LCAILGLNMLGLAVLFFMLLG), 132–152 (GLTVQNFLSAASGIAVIFALI), 170–190 (LLRITLWVLVPVALLIALFFI), 253–273 (FVQMLAIFLIPTALCFAFGEV), 283–303 (LLWAMSVIFVICVGVVMWAEV), 329–349 (VLVSSLFAVVTTAASCGAVIA), 356–376 (ALGGMVPMWLMQIGEVVFGGV), 379–399 (GLYGMMLFVLLAVFIAGLMIG), 416–436 (LTALAILVTPTLVLMGAALAM), 484–504 (LLAFCMFVGRFGVIIPVMAIA), and 526–546 (LFVGLLIGTVLLVGALTFIPA).

It belongs to the KdpA family. In terms of assembly, the system is composed of three essential subunits: KdpA, KdpB and KdpC.

It localises to the cell inner membrane. In terms of biological role, part of the high-affinity ATP-driven potassium transport (or Kdp) system, which catalyzes the hydrolysis of ATP coupled with the electrogenic transport of potassium into the cytoplasm. This subunit binds the periplasmic potassium ions and delivers the ions to the membrane domain of KdpB through an intramembrane tunnel. The polypeptide is Potassium-transporting ATPase potassium-binding subunit (Escherichia coli O9:H4 (strain HS)).